Consider the following 338-residue polypeptide: S-adenosylmethionine:tRNA ribosyltransferase-isomerase (338 aa).

This sequence belongs to the QueA family. Monomer.

The protein resides in the cytoplasm. It carries out the reaction 7-aminomethyl-7-carbaguanosine(34) in tRNA + S-adenosyl-L-methionine = epoxyqueuosine(34) in tRNA + adenine + L-methionine + 2 H(+). It functions in the pathway tRNA modification; tRNA-queuosine biosynthesis. Transfers and isomerizes the ribose moiety from AdoMet to the 7-aminomethyl group of 7-deazaguanine (preQ1-tRNA) to give epoxyqueuosine (oQ-tRNA). The polypeptide is S-adenosylmethionine:tRNA ribosyltransferase-isomerase (Francisella philomiragia subsp. philomiragia (strain ATCC 25017 / CCUG 19701 / FSC 153 / O#319-036)).